A 520-amino-acid chain; its full sequence is Retinoic acid receptor RXR-beta (520 aa).

The interval 1–167 (MSWATRPPFL…GGSGPPEDVK (167 aa)) is disordered. A modulating region spans residues 1-191 (MSWATRPPFL…PGGPGAGKRL (191 aa)). Residue Arg-25 is modified to Omega-N-methylarginine. Residues 64-79 (EAGRDGMGDSGRDSRS) are compositionally biased toward basic and acidic residues. Residues 95 to 118 (SSPPGPPLTPSAPPPPMPPPPLGS) are compositionally biased toward pro residues. The segment covering 119 to 130 (PFPVISSSMGSP) has biased composition (low complexity). The span at 131-140 (GLPPPAPPGF) shows a compositional bias: pro residues. NR C4-type zinc fingers lie at residues 192-212 (CAIC…CEGC) and 228-252 (CRDN…YQKC). The segment at residues 192–257 (CAICGDRSSG…RYQKCLATGM (66 aa)) is a DNA-binding region (nuclear receptor). Residues 258–382 (KREAVQEERQ…HRSIDVRDGI (125 aa)) form a hinge region. Residues 263–275 (QEERQRGKDKDGD) show a composition bias toward basic and acidic residues. 2 disordered regions span residues 263–285 (QEER…APEE) and 300–323 (QKSD…NDPV). In terms of domain architecture, NR LBD spans 283-516 (PEEMPVDRIL…TFLMEMLEAP (234 aa)). The segment covering 307–317 (EGPGATGGGGS) has biased composition (gly residues).

Belongs to the nuclear hormone receptor family. NR2 subfamily. As to quaternary structure, homodimer (in vitro). Heterodimer with other retinoic acid receptor family members. Binds DNA preferentially as a RAR/RXR heterodimer. Interacts with NR1H3. Interacts with AKAP13. As to expression, in all tissues tested, including brain, thymus, spleen and liver.

It localises to the nucleus. The protein localises to the cytoplasm. In terms of biological role, receptor for retinoic acid. Retinoic acid receptors bind as heterodimers to their target response elements in response to their ligands, all-trans or 9-cis retinoic acid, and regulate gene expression in various biological processes. The RAR/RXR heterodimers bind to the retinoic acid response elements (RARE). This Mus musculus (Mouse) protein is Retinoic acid receptor RXR-beta (Rxrb).